The following is a 430-amino-acid chain: Probable acetate kinase (430 aa).

Position 12 (Asn-12) interacts with Mg(2+). Lys-19 is a binding site for ATP. Arg-100 contacts substrate. Asp-159 acts as the Proton donor/acceptor in catalysis. Residue 220-224 (HLGSG) coordinates ATP. Glu-416 is a binding site for Mg(2+).

Belongs to the acetokinase family. Mg(2+) serves as cofactor.

The enzyme catalyses acetate + ATP = acetyl phosphate + ADP. The protein operates within metabolic intermediate biosynthesis; acetyl-CoA biosynthesis; acetyl-CoA from acetate: step 1/2. This is Probable acetate kinase from Cryptococcus neoformans var. neoformans serotype D (strain B-3501A) (Filobasidiella neoformans).